A 206-amino-acid chain; its full sequence is LexA repressor (206 aa).

Residues 29-49 constitute a DNA-binding region (H-T-H motif); sequence VREICEAVGLRSTSTVHGHLA. Catalysis depends on for autocatalytic cleavage activity residues serine 130 and lysine 167.

It belongs to the peptidase S24 family. In terms of assembly, homodimer.

It catalyses the reaction Hydrolysis of Ala-|-Gly bond in repressor LexA.. Functionally, represses a number of genes involved in the response to DNA damage (SOS response), including recA and lexA. In the presence of single-stranded DNA, RecA interacts with LexA causing an autocatalytic cleavage which disrupts the DNA-binding part of LexA, leading to derepression of the SOS regulon and eventually DNA repair. The polypeptide is LexA repressor (Alkaliphilus oremlandii (strain OhILAs) (Clostridium oremlandii (strain OhILAs))).